We begin with the raw amino-acid sequence, 205 residues long: Meiotic nuclear division protein 1 homolog (205 aa).

Residues 79-147 (LHARKRKLET…CADLEKYKEC (69 aa)) adopt a coiled-coil conformation.

It belongs to the MND1 family.

It is found in the nucleus. Functionally, required for proper homologous chromosome pairing and efficient cross-over and intragenic recombination during meiosis. Stimulates both dmc1- and rad51-mediated homologous strand assimilation, which is required for the resolution of meiotic double-strand breaks. This Xenopus laevis (African clawed frog) protein is Meiotic nuclear division protein 1 homolog.